A 565-amino-acid chain; its full sequence is Oxygen-dependent choline dehydrogenase (565 aa).

Residue 7–36 (DYIICGAGSAGNVLATRLTEDPGVTVLLLE) participates in FAD binding. The active-site Proton acceptor is histidine 474.

This sequence belongs to the GMC oxidoreductase family. The cofactor is FAD.

The catalysed reaction is choline + A = betaine aldehyde + AH2. It catalyses the reaction betaine aldehyde + NAD(+) + H2O = glycine betaine + NADH + 2 H(+). The protein operates within amine and polyamine biosynthesis; betaine biosynthesis via choline pathway; betaine aldehyde from choline (cytochrome c reductase route): step 1/1. Its function is as follows. Involved in the biosynthesis of the osmoprotectant glycine betaine. Catalyzes the oxidation of choline to betaine aldehyde and betaine aldehyde to glycine betaine at the same rate. This is Oxygen-dependent choline dehydrogenase from Burkholderia pseudomallei (strain 1710b).